Consider the following 510-residue polypeptide: NAD(P)H-quinone oxidoreductase subunit 2 A, chloroplastic (510 aa).

Helical transmembrane passes span 24–44 (LLLF…GLIL), 57–77 (IPWL…ALLF), 99–119 (IFQF…VEYI), 124–144 (MAIT…MFLC), 149–169 (LITI…LSGY), 183–203 (YLLM…WLYG), 227–247 (PGIS…LSPA), 295–315 (WHLL…LIAI), 323–343 (MLAY…IVGD), 354–374 (YMLF…SFGL), 395–415 (ALSL…AGFF), 418–438 (LHLF…IGLL), and 484–504 (MIVC…IIAI).

It belongs to the complex I subunit 2 family. In terms of assembly, NDH is composed of at least 16 different subunits, 5 of which are encoded in the nucleus.

The protein localises to the plastid. It is found in the chloroplast thylakoid membrane. It catalyses the reaction a plastoquinone + NADH + (n+1) H(+)(in) = a plastoquinol + NAD(+) + n H(+)(out). The enzyme catalyses a plastoquinone + NADPH + (n+1) H(+)(in) = a plastoquinol + NADP(+) + n H(+)(out). In terms of biological role, NDH shuttles electrons from NAD(P)H:plastoquinone, via FMN and iron-sulfur (Fe-S) centers, to quinones in the photosynthetic chain and possibly in a chloroplast respiratory chain. The immediate electron acceptor for the enzyme in this species is believed to be plastoquinone. Couples the redox reaction to proton translocation, and thus conserves the redox energy in a proton gradient. In Carica papaya (Papaya), this protein is NAD(P)H-quinone oxidoreductase subunit 2 A, chloroplastic.